The chain runs to 370 residues: MKKVIVGISGGVDSSVSAYLLKLRGYDVMGVFMQNWDPYINKESNNDAIKSKLDTCEAEYDYQIASKVCQRLGIKLERINFIKEYWDMVFEPFLDEYKKGLTPNPDILCNKYIKFGAFHKYCFENFDCDYIATGHYADVRFNQANNIYELLEAKDIEKDQTYFLCSLNQSQLSKSIFPLADLTKKEVREIANKIGLDNWDKKDSTGICFIGERNFKNFLHNYIDKKPGKIIDIDTSKEVGTHEGIHFYTIGQRKGLNLGGNSSRYFVCKKDISNNILYVTSNESKLKNLSSVVATCSYFNWIGYVPNNNKVEIRIRHSKNKINGHFKILKDNVVQFEFDSPEVISPGQYIVAYQKGVCLGGGPIKDNINE.

Residues 7 to 14 and methionine 33 contribute to the ATP site; that span reads GISGGVDS. Positions 104 to 106 are interaction with target base in tRNA; that stretch reads NPD. Catalysis depends on cysteine 109, which acts as the Nucleophile. A disulfide bridge links cysteine 109 with cysteine 208. An ATP-binding site is contributed by glycine 134. The tract at residues 158 to 160 is interaction with tRNA; it reads KDQ. Cysteine 208 serves as the catalytic Cysteine persulfide intermediate.

Belongs to the MnmA/TRMU family.

It is found in the cytoplasm. The enzyme catalyses S-sulfanyl-L-cysteinyl-[protein] + uridine(34) in tRNA + AH2 + ATP = 2-thiouridine(34) in tRNA + L-cysteinyl-[protein] + A + AMP + diphosphate + H(+). Catalyzes the 2-thiolation of uridine at the wobble position (U34) of tRNA, leading to the formation of s(2)U34. This is tRNA-specific 2-thiouridylase MnmA from Malacoplasma penetrans (strain HF-2) (Mycoplasma penetrans).